We begin with the raw amino-acid sequence, 495 residues long: D-hydantoinase/dihydropyrimidinase (495 aa).

His59, His61, and Lys150 together coordinate Zn(2+). Lys150 is modified (N6-carboxylysine). Tyr155 contributes to the substrate binding site. 2 residues coordinate Zn(2+): His183 and His239. Residue Ser289 coordinates substrate. Zn(2+) is bound at residue Asp316. Residue Asn337 participates in substrate binding.

It belongs to the metallo-dependent hydrolases superfamily. Hydantoinase/dihydropyrimidinase family. As to quaternary structure, homotetramer. It depends on Zn(2+) as a cofactor. Post-translationally, carboxylation allows a single lysine to coordinate two zinc ions.

It catalyses the reaction 5,6-dihydrouracil + H2O = 3-(carbamoylamino)propanoate + H(+). Functionally, catalyzes the hydrolysis of dihydropyrimidines and of the structurally related DL-5-mono-substituted hydantoins, to produce N-carbamoyl-D-amino acids. The polypeptide is D-hydantoinase/dihydropyrimidinase (Pseudomonas putida (Arthrobacter siderocapsulatus)).